A 110-amino-acid chain; its full sequence is UPF0122 protein SPG_1182 (110 aa).

Belongs to the UPF0122 family.

Its function is as follows. Might take part in the signal recognition particle (SRP) pathway. This is inferred from the conservation of its genetic proximity to ftsY/ffh. May be a regulatory protein. This chain is UPF0122 protein SPG_1182, found in Streptococcus pneumoniae serotype 19F (strain G54).